A 150-amino-acid polypeptide reads, in one-letter code: Meiotically up-regulated gene 108 protein (150 aa).

A compositionally biased stretch (polar residues) spans 1–11 (MANRFTSSDQT). The interval 1–150 (MANRFTSSDQ…RDISLLGSTI (150 aa)) is disordered. The span at 12–23 (QETHGHHVDKHS) shows a compositional bias: basic and acidic residues. Residues 83-93 (NRSSQHTGRVN) show a composition bias toward polar residues.

The protein localises to the cytoplasm. It localises to the nucleus. In terms of biological role, has a role in meiosis. The chain is Meiotically up-regulated gene 108 protein (mug108) from Schizosaccharomyces pombe (strain 972 / ATCC 24843) (Fission yeast).